A 324-amino-acid chain; its full sequence is Glyoxylate/hydroxypyruvate reductase B (324 aa).

Residues R237 and E266 contribute to the active site. The active-site Proton donor is the H285.

This sequence belongs to the D-isomer specific 2-hydroxyacid dehydrogenase family. GhrB subfamily. In terms of assembly, homodimer.

It is found in the cytoplasm. The catalysed reaction is glycolate + NADP(+) = glyoxylate + NADPH + H(+). It carries out the reaction (R)-glycerate + NAD(+) = 3-hydroxypyruvate + NADH + H(+). The enzyme catalyses (R)-glycerate + NADP(+) = 3-hydroxypyruvate + NADPH + H(+). Its function is as follows. Catalyzes the NADPH-dependent reduction of glyoxylate and hydroxypyruvate into glycolate and glycerate, respectively. The polypeptide is Glyoxylate/hydroxypyruvate reductase B (Escherichia coli (strain ATCC 8739 / DSM 1576 / NBRC 3972 / NCIMB 8545 / WDCM 00012 / Crooks)).